A 555-amino-acid polypeptide reads, in one-letter code: GPI-anchor transamidase component PIGS (555 aa).

The Cytoplasmic segment spans residues 2-18; it reads AAAGAAATHLEVARGKR. Residues Arg-15 and Arg-18 each contribute to the a cardiolipin site. A helical membrane pass occupies residues 19–39; that stretch reads AALFFAAVAIVLGLPLWWKTT. Residues 40–517 are Lumenal-facing; sequence ETYRASLPYS…LHLLYFPDDQ (478 aa). 2 N-linked (GlcNAc...) asparagine glycosylation sites follow: Asn-267 and Asn-370. A helical membrane pass occupies residues 518 to 532; that stretch reads KFAIYIPLFLPMAVP. Topologically, residues 533–555 are cytoplasmic; the sequence is ILLSLVKIFLETRKSWRKPEKTD.

It belongs to the PIGS family. Heteropentamer. Part of the GPI-anchor transamidase complex, consisting of PIGK, PIGT, PIGS, PIGU and GAA1.

The protein localises to the endoplasmic reticulum membrane. Its pathway is glycolipid biosynthesis; glycosylphosphatidylinositol-anchor biosynthesis. Functionally, component of the glycosylphosphatidylinositol-anchor (GPI-anchor) transamidase (GPI-T) complex that catalyzes the formation of the linkage between a proprotein and a GPI-anchor and participates in GPI anchored protein biosynthesis. The chain is GPI-anchor transamidase component PIGS from Homo sapiens (Human).